Consider the following 630-residue polypeptide: Angiotensin-converting enzyme-related protein (630 aa).

Residues 1 to 22 (MGACNITVLLLVIMLWLPHGLS) form the signal peptide. Residues 28 to 615 (SASVLEARRF…SRLGVPLGWG (588 aa)) form the Peptidase M2 domain. 2 disulfide bridges follow: C142–C150 and C344–C362. Position 375 (H375) interacts with Zn(2+). The Proton acceptor role is filled by E376. Zn(2+)-binding residues include H379 and E403. H505 acts as the Proton donor in catalysis. The cysteines at positions 530 and 548 are disulfide-linked.

It belongs to the peptidase M2 family. Requires Zn(2+) as cofactor. Glycosylated.

The protein resides in the secreted. It is found in the extracellular space. The enzyme catalyses Release of a C-terminal dipeptide, oligopeptide-|-Xaa-Yaa, when Xaa is not Pro, and Yaa is neither Asp nor Glu. Thus, conversion of angiotensin I to angiotensin II, with increase in vasoconstrictor activity, but no action on angiotensin II.. With respect to regulation, inhibited by captopril, lisinopril, trandolaprilat, fosinoprilat and enalaprilat. Functionally, may be involved in the specific maturation or degradation of a number of bioactive peptides. May have a role in the specification of heart progenitors. This Drosophila melanogaster (Fruit fly) protein is Angiotensin-converting enzyme-related protein (Acer).